The sequence spans 493 residues: Cobyric acid synthase (493 aa).

The region spanning 246–440 (PIDIAVIKMP…IHGVFDGIVF (195 aa)) is the GATase cobBQ-type domain. Cys-326 functions as the Nucleophile in the catalytic mechanism. His-432 is a catalytic residue.

Belongs to the CobB/CobQ family. CobQ subfamily.

It functions in the pathway cofactor biosynthesis; adenosylcobalamin biosynthesis. Catalyzes amidations at positions B, D, E, and G on adenosylcobyrinic A,C-diamide. NH(2) groups are provided by glutamine, and one molecule of ATP is hydrogenolyzed for each amidation. This chain is Cobyric acid synthase, found in Clostridium botulinum (strain 657 / Type Ba4).